Consider the following 425-residue polypeptide: Formyl-CoA:oxalate CoA-transferase (425 aa).

CoA contacts are provided by residues 17–18 (QS), arginine 38, 72–75 (LDTK), 96–98 (NFG), arginine 104, and 136–139 (KVYE). Catalysis depends on aspartate 168, which acts as the Nucleophile. Substrate is bound at residue 247–249 (GGQ).

It belongs to the CoA-transferase III family. Frc subfamily. In terms of assembly, homodimer.

It carries out the reaction formyl-CoA + oxalate = oxalyl-CoA + formate. It participates in metabolic intermediate degradation; oxalate degradation; CO(2) and formate from oxalate: step 1/2. Its function is as follows. Involved in the catabolism of oxalate and in the adapatation to low pH via the induction of the oxalate-dependent acid tolerance response (ATR). Catalyzes the transfer of the CoA moiety from formyl-CoA to oxalate. The polypeptide is Formyl-CoA:oxalate CoA-transferase (Rhodopseudomonas palustris (strain BisA53)).